The sequence spans 298 residues: tRNA dimethylallyltransferase 2 (298 aa).

Residue 10–17 (GPTASGKT) coordinates ATP. 12–17 (TASGKT) provides a ligand contact to substrate. The interaction with substrate tRNA stretch occupies residues 35–38 (DSRQ).

The protein belongs to the IPP transferase family. As to quaternary structure, monomer. Mg(2+) is required as a cofactor.

The catalysed reaction is adenosine(37) in tRNA + dimethylallyl diphosphate = N(6)-dimethylallyladenosine(37) in tRNA + diphosphate. In terms of biological role, catalyzes the transfer of a dimethylallyl group onto the adenine at position 37 in tRNAs that read codons beginning with uridine, leading to the formation of N6-(dimethylallyl)adenosine (i(6)A). This Syntrophotalea carbinolica (strain DSM 2380 / NBRC 103641 / GraBd1) (Pelobacter carbinolicus) protein is tRNA dimethylallyltransferase 2.